Reading from the N-terminus, the 398-residue chain is Acetate kinase (398 aa).

Residue asparagine 7 coordinates Mg(2+). An ATP-binding site is contributed by lysine 14. Arginine 91 is a binding site for substrate. Aspartate 148 (proton donor/acceptor) is an active-site residue. Residues 208–212 (HLGNG), 282–284 (DFR), and 330–334 (GVGEN) contribute to the ATP site. Position 383 (glutamate 383) interacts with Mg(2+).

This sequence belongs to the acetokinase family. Homodimer. Mg(2+) serves as cofactor. Mn(2+) is required as a cofactor.

It is found in the cytoplasm. It catalyses the reaction acetate + ATP = acetyl phosphate + ADP. Its pathway is metabolic intermediate biosynthesis; acetyl-CoA biosynthesis; acetyl-CoA from acetate: step 1/2. Catalyzes the formation of acetyl phosphate from acetate and ATP. Can also catalyze the reverse reaction. The chain is Acetate kinase from Carboxydothermus hydrogenoformans (strain ATCC BAA-161 / DSM 6008 / Z-2901).